The chain runs to 435 residues: Glutamate-1-semialdehyde 2,1-aminomutase (435 aa).

N6-(pyridoxal phosphate)lysine is present on K270.

The protein belongs to the class-III pyridoxal-phosphate-dependent aminotransferase family. HemL subfamily. As to quaternary structure, homodimer. Pyridoxal 5'-phosphate serves as cofactor.

It is found in the cytoplasm. The enzyme catalyses (S)-4-amino-5-oxopentanoate = 5-aminolevulinate. It functions in the pathway porphyrin-containing compound metabolism; protoporphyrin-IX biosynthesis; 5-aminolevulinate from L-glutamyl-tRNA(Glu): step 2/2. The chain is Glutamate-1-semialdehyde 2,1-aminomutase from Wigglesworthia glossinidia brevipalpis.